Consider the following 239-residue polypeptide: Lactate utilization protein A 2 (239 aa).

Belongs to the LutA/YkgE family.

Its function is as follows. Is involved in L-lactate degradation and allows cells to grow with lactate as the sole carbon source. In Bacillus mycoides (strain KBAB4) (Bacillus weihenstephanensis), this protein is Lactate utilization protein A 2.